Here is a 413-residue protein sequence, read N- to C-terminus: PAB1-binding protein 2 (413 aa).

A compositionally biased stretch (low complexity) spans 1 to 23 (MSTETTKPSITTTPTTVLVSPNT). Positions 1-36 (MSTETTKPSITTTPTTVLVSPNTLKRKKGEDTSEEQ) are disordered. KH domains follow at residues 66-130 (DVHL…YGMI), 148-213 (EISI…TFYI), and 330-394 (FVQQ…IMLI).

Interacts with PAB1.

It localises to the nucleus. The sequence is that of PAB1-binding protein 2 (PBP2) from Saccharomyces cerevisiae (strain ATCC 204508 / S288c) (Baker's yeast).